Here is a 186-residue protein sequence, read N- to C-terminus: UPF0301 protein Swoo_1337 (186 aa).

This sequence belongs to the UPF0301 (AlgH) family.

In Shewanella woodyi (strain ATCC 51908 / MS32), this protein is UPF0301 protein Swoo_1337.